The following is a 124-amino-acid chain: Small ribosomal subunit protein uS12 (124 aa).

2 disordered regions span residues 9 to 32 (RKGRRDKVAKTKTAALKGSPQRRG) and 105 to 124 (QGVKNRKQARSRYGAKKEKS). Over residues 108–118 (KNRKQARSRYG) the composition is skewed to basic residues.

It belongs to the universal ribosomal protein uS12 family. Part of the 30S ribosomal subunit. Contacts proteins S8 and S17. May interact with IF1 in the 30S initiation complex.

Functionally, with S4 and S5 plays an important role in translational accuracy. Its function is as follows. Interacts with and stabilizes bases of the 16S rRNA that are involved in tRNA selection in the A site and with the mRNA backbone. Located at the interface of the 30S and 50S subunits, it traverses the body of the 30S subunit contacting proteins on the other side and probably holding the rRNA structure together. The combined cluster of proteins S8, S12 and S17 appears to hold together the shoulder and platform of the 30S subunit. This is Small ribosomal subunit protein uS12 from Nocardia farcinica (strain IFM 10152).